Here is a 77-residue protein sequence, read N- to C-terminus: Secapin (77 aa).

An N-terminal signal peptide occupies residues 1-32 (MKNYSKNATYLITVLLFSFVAMLLIIPSKCEA). The propeptide occupies 33–52 (VSNDMQPLEARSADLVPEPR). The cysteines at positions 61 and 72 are disulfide-linked.

The protein belongs to the secapin family. Expressed by the venom gland.

The protein localises to the secreted. Nontoxic peptide. The chain is Secapin from Vespa magnifica (Hornet).